Consider the following 587-residue polypeptide: Pescadillo homolog (587 aa).

Residues 267 to 306 adopt a coiled-coil conformation; that stretch reads LKKKEEKNDEEGKNLSKKELNKAIKADQEQQENDEQDNNN. The interval 290–311 is disordered; sequence IKADQEQQENDEQDNNNGESVE. A compositionally biased stretch (acidic residues) spans 295 to 311; sequence EQQENDEQDNNNGESVE. In terms of domain architecture, BRCT spans 335–434; the sequence is STAELFSKFI…ELINVNEYAA (100 aa). The interval 437–587 is disordered; it reads TLPPHLSPWG…KKKEQLKKLN (151 aa). Residues 459–494 show a composition bias toward acidic residues; sequence KEDGEAEEDTDEEEEEVEIEDGDEDQEDEEEEEDED. The stretch at 470-587 forms a coiled coil; that stretch reads EEEEEVEIED…KKKEQLKKLN (118 aa). Basic and acidic residues-rich tracts occupy residues 529–541, 559–569, and 578–587; these read SNKEADEEKELKK, IEKKENREKQL, and KKKEQLKKLN.

Belongs to the pescadillo family. As to quaternary structure, component of the NOP7 complex, composed of ERB1, NOP7 and YTM1. The complex is held together by ERB1, which interacts with NOP7 via its N-terminal domain and with YTM1 via a high-affinity interaction between the seven-bladed beta-propeller domains of the 2 proteins. The NOP7 complex associates with the 66S pre-ribosome.

It localises to the nucleus. The protein resides in the nucleolus. It is found in the nucleoplasm. Functionally, component of the NOP7 complex, which is required for maturation of the 25S and 5.8S ribosomal RNAs and formation of the 60S ribosome. Required for the transition from hyphal to yeast growth. The protein is Pescadillo homolog of Candida albicans (strain SC5314 / ATCC MYA-2876) (Yeast).